A 256-amino-acid polypeptide reads, in one-letter code: Na(+)-translocating NADH-quinone reductase subunit C (256 aa).

Residues 12 to 32 (LGVVIGLSLVCSIIVSTAAVG) form a helical membrane-spanning segment. T224 bears the FMN phosphoryl threonine mark.

Belongs to the NqrC family. In terms of assembly, composed of six subunits; NqrA, NqrB, NqrC, NqrD, NqrE and NqrF. FMN is required as a cofactor.

Its subcellular location is the cell inner membrane. The enzyme catalyses a ubiquinone + n Na(+)(in) + NADH + H(+) = a ubiquinol + n Na(+)(out) + NAD(+). This reaction is tightly coupled to the Na(+) pumping activity and specifically requires Na(+) for activity. Inhibited by korormicin and 2-N-heptyl-4-hydroxyquinoline N-oxide (HQNO). Functionally, NQR complex catalyzes the reduction of ubiquinone-1 to ubiquinol by two successive reactions, coupled with the transport of Na(+) ions from the cytoplasm to the periplasm. NqrA to NqrE are probably involved in the second step, the conversion of ubisemiquinone to ubiquinol. In Vibrio alginolyticus, this protein is Na(+)-translocating NADH-quinone reductase subunit C.